The sequence spans 518 residues: U3 small nucleolar RNA-associated protein 15 homolog (518 aa).

A2 is modified (N-acetylalanine). WD repeat units follow at residues 36–75 (KEFG…PIKT), 78–117 (RFKD…PLRQ), 120–159 (GHTK…EILT), 162–202 (EHSD…SVLS), 204–242 (EHGQ…QLLV), 246–285 (NHHK…VVHS), and 287–326 (DYAA…KKES). Residue K249 forms a Glycyl lysine isopeptide (Lys-Gly) (interchain with G-Cter in SUMO2) linkage.

In terms of assembly, part of the small subunit (SSU) processome, composed of more than 70 proteins and the RNA chaperone small nucleolar RNA (snoRNA) U3. May be a component of the proposed t-UTP subcomplex of the ribosomal small subunit (SSU) processome containing at least UTP4, WDR43, HEATR1, UTP15, WDR75. Interacts directly with UTP4 and WDR43.

The protein localises to the nucleus. The protein resides in the nucleolus. Ribosome biogenesis factor. Involved in nucleolar processing of pre-18S ribosomal RNA. Required for optimal pre-ribosomal RNA transcription by RNA polymerase I. Part of the small subunit (SSU) processome, first precursor of the small eukaryotic ribosomal subunit. During the assembly of the SSU processome in the nucleolus, many ribosome biogenesis factors, an RNA chaperone and ribosomal proteins associate with the nascent pre-rRNA and work in concert to generate RNA folding, modifications, rearrangements and cleavage as well as targeted degradation of pre-ribosomal RNA by the RNA exosome. This is U3 small nucleolar RNA-associated protein 15 homolog from Homo sapiens (Human).